We begin with the raw amino-acid sequence, 92 residues long: Small ribosomal subunit protein uS17 (92 aa).

This sequence belongs to the universal ribosomal protein uS17 family. Part of the 30S ribosomal subunit.

One of the primary rRNA binding proteins, it binds specifically to the 5'-end of 16S ribosomal RNA. In Cupriavidus necator (strain ATCC 17699 / DSM 428 / KCTC 22496 / NCIMB 10442 / H16 / Stanier 337) (Ralstonia eutropha), this protein is Small ribosomal subunit protein uS17.